A 315-amino-acid chain; its full sequence is 4-hydroxy-3-methylbut-2-enyl diphosphate reductase (315 aa).

Cysteine 12 lines the [4Fe-4S] cluster pocket. Histidine 41 and histidine 74 together coordinate (2E)-4-hydroxy-3-methylbut-2-enyl diphosphate. Dimethylallyl diphosphate-binding residues include histidine 41 and histidine 74. Isopentenyl diphosphate contacts are provided by histidine 41 and histidine 74. Residue cysteine 96 participates in [4Fe-4S] cluster binding. Histidine 124 contacts (2E)-4-hydroxy-3-methylbut-2-enyl diphosphate. Histidine 124 provides a ligand contact to dimethylallyl diphosphate. Histidine 124 contacts isopentenyl diphosphate. The active-site Proton donor is the glutamate 126. Threonine 168 is a (2E)-4-hydroxy-3-methylbut-2-enyl diphosphate binding site. A [4Fe-4S] cluster-binding site is contributed by cysteine 198. Residues serine 226, serine 227, asparagine 228, and serine 270 each contribute to the (2E)-4-hydroxy-3-methylbut-2-enyl diphosphate site. Positions 226, 227, 228, and 270 each coordinate dimethylallyl diphosphate. 4 residues coordinate isopentenyl diphosphate: serine 226, serine 227, asparagine 228, and serine 270.

Belongs to the IspH family. [4Fe-4S] cluster is required as a cofactor.

The catalysed reaction is isopentenyl diphosphate + 2 oxidized [2Fe-2S]-[ferredoxin] + H2O = (2E)-4-hydroxy-3-methylbut-2-enyl diphosphate + 2 reduced [2Fe-2S]-[ferredoxin] + 2 H(+). The enzyme catalyses dimethylallyl diphosphate + 2 oxidized [2Fe-2S]-[ferredoxin] + H2O = (2E)-4-hydroxy-3-methylbut-2-enyl diphosphate + 2 reduced [2Fe-2S]-[ferredoxin] + 2 H(+). It functions in the pathway isoprenoid biosynthesis; dimethylallyl diphosphate biosynthesis; dimethylallyl diphosphate from (2E)-4-hydroxy-3-methylbutenyl diphosphate: step 1/1. The protein operates within isoprenoid biosynthesis; isopentenyl diphosphate biosynthesis via DXP pathway; isopentenyl diphosphate from 1-deoxy-D-xylulose 5-phosphate: step 6/6. Catalyzes the conversion of 1-hydroxy-2-methyl-2-(E)-butenyl 4-diphosphate (HMBPP) into a mixture of isopentenyl diphosphate (IPP) and dimethylallyl diphosphate (DMAPP). Acts in the terminal step of the DOXP/MEP pathway for isoprenoid precursor biosynthesis. The polypeptide is 4-hydroxy-3-methylbut-2-enyl diphosphate reductase (Pseudomonas syringae pv. tomato (strain ATCC BAA-871 / DC3000)).